The primary structure comprises 376 residues: Fibromodulin (376 aa).

Positions 1 to 18 are cleaved as a signal peptide; the sequence is MQWTSLLLLAGLFSLSQA. Position 19 is a pyrrolidone carboxylic acid (Q19). 7 positions are modified to sulfotyrosine: Y20, Y38, Y39, Y45, Y47, Y53, and Y55. An LRRNT domain is found at 67–105; the sequence is SPSPPDPRDCPQECDCPPNFPTAMYCDNRNLKYLPFVPS. LRR repeat units lie at residues 106-127, 130-151, 156-176, 177-198, 201-222, 224-245, 246-266, and 269-289; these read RMKY…VFDN, GLLW…RKVF, HLER…PLPR, SLRE…ALEG, NLTA…MRGL, SLIL…LPSA, LEQL…YFRG, and KLLY…ASNT. The N-linked (GlcNAc...) (keratan sulfate) asparagine glycan is linked to N127. A glycan (N-linked (GlcNAc...) (keratan sulfate) asparagine) is linked at N166. N201 carries an N-linked (GlcNAc...) (keratan sulfate) asparagine glycan. An N-linked (GlcNAc...) (keratan sulfate) asparagine glycan is attached at N291. LRR repeat units follow at residues 294–315 and 316–335; these read SLLE…NTNL and ENLY…SFCT. C334 and C367 are disulfide-bonded. Residue N341 is glycosylated (N-linked (GlcNAc...) asparagine). Residues 344-365 form an LRR 11 repeat; it reads KLQVLRLDGNEIKRSAMPADAP.

This sequence belongs to the small leucine-rich proteoglycan (SLRP) family. SLRP class II subfamily. As to quaternary structure, binds to type I and type II collagen. Binds keratan sulfate chains.

It localises to the secreted. The protein resides in the extracellular space. Its subcellular location is the extracellular matrix. Functionally, affects the rate of fibrils formation. May have a primary role in collagen fibrillogenesis. This chain is Fibromodulin (FMOD), found in Homo sapiens (Human).